The sequence spans 336 residues: MKRSAPVQFAKKDVANCRWLGEFLVHLESTRNVSAKTVTAYTTDLIQFFEFLTDESGHQEMSAVDPELVEVADVRRFMGDLLDSGIKPRSIARKLASVKSFYRFLLDTGKIERSPLSLVLTPRLERKIPDFLSEEEASRLFDQLVLSDQESVGPEQGQKAAVQRFELARDRAVLELLYGCGLRLSEVTGLENADVDLVHGFLKVTGKGRKQRIVPFGEPAAEALRNYFEVRRNFFRILKEGAGETSKVFVTAKGRQIYPMLVQRMTKRYLSPVTESARKNPHMLRHTFATHMLNGGADLKSVSEMLGHSNLTTTELYTHVTFNRLRDAYTKAHPRA.

A Core-binding (CB) domain is found at 14-106 (VANCRWLGEF…SVKSFYRFLL (93 aa)). The 204-residue stretch at 127 to 330 (KIPDFLSEEE…TFNRLRDAYT (204 aa)) folds into the Tyr recombinase domain. Catalysis depends on residues arginine 183, lysine 207, histidine 282, arginine 285, and histidine 308. Catalysis depends on tyrosine 317, which acts as the O-(3'-phospho-DNA)-tyrosine intermediate.

Belongs to the 'phage' integrase family. XerC subfamily. In terms of assembly, forms a cyclic heterotetrameric complex composed of two molecules of XerC and two molecules of XerD.

Its subcellular location is the cytoplasm. Site-specific tyrosine recombinase, which acts by catalyzing the cutting and rejoining of the recombining DNA molecules. The XerC-XerD complex is essential to convert dimers of the bacterial chromosome into monomers to permit their segregation at cell division. It also contributes to the segregational stability of plasmids. In Chlorobaculum tepidum (strain ATCC 49652 / DSM 12025 / NBRC 103806 / TLS) (Chlorobium tepidum), this protein is Tyrosine recombinase XerC.